The primary structure comprises 90 residues: Probable Fe(2+)-trafficking protein (90 aa).

This sequence belongs to the Fe(2+)-trafficking protein family.

In terms of biological role, could be a mediator in iron transactions between iron acquisition and iron-requiring processes, such as synthesis and/or repair of Fe-S clusters in biosynthetic enzymes. This is Probable Fe(2+)-trafficking protein from Vibrio campbellii (strain ATCC BAA-1116).